A 135-amino-acid polypeptide reads, in one-letter code: Large-conductance mechanosensitive channel (135 aa).

The next 2 membrane-spanning stretches (helical) occupy residues 9–29 (AFAA…GAAF) and 79–99 (IQTI…LKAI).

Belongs to the MscL family. In terms of assembly, homopentamer.

The protein localises to the cell inner membrane. In terms of biological role, channel that opens in response to stretch forces in the membrane lipid bilayer. May participate in the regulation of osmotic pressure changes within the cell. In Aeromonas salmonicida (strain A449), this protein is Large-conductance mechanosensitive channel.